Reading from the N-terminus, the 849-residue chain is DNA mismatch repair protein MutS (849 aa).

Residue 665 to 672 participates in ATP binding; sequence GPNMAGKS.

The protein belongs to the DNA mismatch repair MutS family.

In terms of biological role, this protein is involved in the repair of mismatches in DNA. It is possible that it carries out the mismatch recognition step. This protein has a weak ATPase activity. The sequence is that of DNA mismatch repair protein MutS from Wolbachia pipientis wMel.